We begin with the raw amino-acid sequence, 89 residues long: MAGIANGVGLLISFMLICGGMPKGHALGTSPYCEKVLSRFAPPGNCLKKNGNALCKESCANEQFREGVCLHLPKPQSKLNCYCSVLKCP.

Positions 1-26 (MAGIANGVGLLISFMLICGGMPKGHA) are cleaved as a signal peptide. 4 disulfides stabilise this stretch: cysteine 33–cysteine 88, cysteine 46–cysteine 69, cysteine 55–cysteine 81, and cysteine 59–cysteine 83.

This sequence belongs to the DEFL family.

The protein resides in the secreted. This is Putative defensin-like protein 40 from Arabidopsis thaliana (Mouse-ear cress).